A 315-amino-acid chain; its full sequence is Homoserine kinase (315 aa).

97–107 (PPARGLGSSAT) contributes to the ATP binding site.

It belongs to the GHMP kinase family. Homoserine kinase subfamily.

It localises to the cytoplasm. The enzyme catalyses L-homoserine + ATP = O-phospho-L-homoserine + ADP + H(+). Its pathway is amino-acid biosynthesis; L-threonine biosynthesis; L-threonine from L-aspartate: step 4/5. Its function is as follows. Catalyzes the ATP-dependent phosphorylation of L-homoserine to L-homoserine phosphate. In Prochlorococcus marinus (strain MIT 9301), this protein is Homoserine kinase.